Here is a 280-residue protein sequence, read N- to C-terminus: Protease HtpX (280 aa).

2 helical membrane-spanning segments follow: residues 7-26 (TFIL…GLLG) and 30-49 (GMLV…YWYS). Position 129 (histidine 129) interacts with Zn(2+). The active site involves glutamate 130. Zn(2+) is bound at residue histidine 133. 2 consecutive transmembrane segments (helical) span residues 146-166 (ATIA…SMFG) and 178-198 (VVGM…QMAI). Glutamate 203 provides a ligand contact to Zn(2+).

Belongs to the peptidase M48B family. Zn(2+) is required as a cofactor.

It localises to the cell inner membrane. This chain is Protease HtpX, found in Legionella pneumophila (strain Corby).